Consider the following 366-residue polypeptide: tRNA/tmRNA (uracil-C(5))-methyltransferase (366 aa).

S-adenosyl-L-methionine-binding residues include Q190, Y218, N223, E239, and D299. C324 (nucleophile) is an active-site residue. The Proton acceptor role is filled by E358.

The protein belongs to the class I-like SAM-binding methyltransferase superfamily. RNA M5U methyltransferase family. TrmA subfamily.

The catalysed reaction is uridine(54) in tRNA + S-adenosyl-L-methionine = 5-methyluridine(54) in tRNA + S-adenosyl-L-homocysteine + H(+). It catalyses the reaction uridine(341) in tmRNA + S-adenosyl-L-methionine = 5-methyluridine(341) in tmRNA + S-adenosyl-L-homocysteine + H(+). In terms of biological role, dual-specificity methyltransferase that catalyzes the formation of 5-methyluridine at position 54 (m5U54) in all tRNAs, and that of position 341 (m5U341) in tmRNA (transfer-mRNA). The chain is tRNA/tmRNA (uracil-C(5))-methyltransferase from Escherichia coli O17:K52:H18 (strain UMN026 / ExPEC).